Reading from the N-terminus, the 179-residue chain is Large ribosomal subunit protein uL5 (179 aa).

This sequence belongs to the universal ribosomal protein uL5 family. Part of the 50S ribosomal subunit; part of the 5S rRNA/L5/L18/L25 subcomplex. Contacts the 5S rRNA and the P site tRNA. Forms a bridge to the 30S subunit in the 70S ribosome.

Its function is as follows. This is one of the proteins that bind and probably mediate the attachment of the 5S RNA into the large ribosomal subunit, where it forms part of the central protuberance. In the 70S ribosome it contacts protein S13 of the 30S subunit (bridge B1b), connecting the 2 subunits; this bridge is implicated in subunit movement. Contacts the P site tRNA; the 5S rRNA and some of its associated proteins might help stabilize positioning of ribosome-bound tRNAs. In Pseudomonas fluorescens (strain ATCC BAA-477 / NRRL B-23932 / Pf-5), this protein is Large ribosomal subunit protein uL5.